A 240-amino-acid chain; its full sequence is Phosphoribosylaminoimidazole-succinocarboxamide synthase (240 aa).

This sequence belongs to the SAICAR synthetase family.

It catalyses the reaction 5-amino-1-(5-phospho-D-ribosyl)imidazole-4-carboxylate + L-aspartate + ATP = (2S)-2-[5-amino-1-(5-phospho-beta-D-ribosyl)imidazole-4-carboxamido]succinate + ADP + phosphate + 2 H(+). The protein operates within purine metabolism; IMP biosynthesis via de novo pathway; 5-amino-1-(5-phospho-D-ribosyl)imidazole-4-carboxamide from 5-amino-1-(5-phospho-D-ribosyl)imidazole-4-carboxylate: step 1/2. The polypeptide is Phosphoribosylaminoimidazole-succinocarboxamide synthase (Wigglesworthia glossinidia brevipalpis).